Here is a 622-residue protein sequence, read N- to C-terminus: Leucine-rich repeat and immunoglobulin-like domain-containing nogo receptor-interacting protein 1-B (622 aa).

An N-terminal signal peptide occupies residues 1-43 (MTFLQVTIKMVAREASGHSYLVACWQPILILMLGTVLSGSATG). Intrachain disulfides connect Cys-44–Cys-50 and Cys-48–Cys-59. The region spanning 44-73 (CPSRCECSAQERSVVCHRRKLITLPEGIPI) is the LRRNT domain. The Extracellular portion of the chain corresponds to 44-563 (CPSRCECSAQ…FDMKTLIIAT (520 aa)). LRR repeat units lie at residues 74-95 (DTRLLDLSKNRLKAINPEEFLN), 98-119 (QLEDLQLNENIISVIEPGAFSN), 122-143 (GLRTLGLRNNNLKLIQLGVFTG), 146-167 (NLTRLDISENKIVILLDYMFQE), 170-191 (NLKELEVGDNDLVFISHRAFHG), 194-215 (SLEQLTMERCNLTSVPTEAFSH), 218-239 (NLLTLKLRHLNVNVIRDFSFRR), 266-287 (NITTLSITNCNLTAVPYVAIQH), 290-311 (YLRFFNLSFNPIEVVEGNKMHN), 314-335 (RLQAFHLVGGRLVSIEPYSFKG), and 338-359 (YLRVLNVSSNSLSTLEESAFHS). Asn-146 carries N-linked (GlcNAc...) asparagine glycosylation. Asn-204 is a glycosylation site (N-linked (GlcNAc...) asparagine). Asn-266, Asn-276, and Asn-295 each carry an N-linked (GlcNAc...) asparagine glycan. An N-linked (GlcNAc...) asparagine glycan is attached at Asn-343. The 55-residue stretch at 371–425 (NPLACDCRLLWVFRRRWRLNFNRQQPSCETPEFLQGKEFKDFPDVLPPNYFTCQK) folds into the LRRCT domain. 3 disulfides stabilise this stretch: Cys-375/Cys-398, Cys-377/Cys-423, and Cys-448/Cys-499. Residues 413-515 (PDVLPPNYFT…GNDTRLAHLH (103 aa)) enclose the Ig-like C2-type domain. N-linked (GlcNAc...) asparagine glycosylation is found at Asn-494, Asn-507, Asn-528, and Asn-544. The chain crosses the membrane as a helical span at residues 564 to 584 (TMGFISFLGVVLFCLVLLFLW). Residues 585-622 (SRGKGNAKPNIEIEYVPRKVDGENSPNEGSHKISMKMI) lie on the Cytoplasmic side of the membrane.

It localises to the cell membrane. Functionally, may play a role in regulating axonal regeneration and plasticity in the adult central nervous system. This is Leucine-rich repeat and immunoglobulin-like domain-containing nogo receptor-interacting protein 1-B (lingo1b) from Danio rerio (Zebrafish).